The following is a 1409-amino-acid chain: Adhesion and penetration protein autotransporter (1409 aa).

Positions 1–25 are cleaved as a signal peptide; sequence MKKTVFRLNFLTACVSLGIASQAWA. The region spanning 26 to 294 is the Peptidase S6 domain; sequence GHTYFGIDYQ…LIREEWFYNE (269 aa). Residue Ser-250 is part of the active site. Disordered stretches follow at residues 866-888 and 1016-1078; these read YSAS…TPTS and AKQV…SKRA. A compositionally biased stretch (polar residues) spans 1057 to 1067; sequence VEQTTETQTSK. The span at 1068 to 1077 shows a compositional bias: basic residues; the sequence is PKTKKGRSKR. One can recognise an Autotransporter domain in the interval 1156-1409; it reads VDQAQSALWT…NVGVKLGYRW (254 aa).

The protein resides in the periplasm. Its subcellular location is the secreted. It localises to the cell surface. It is found in the cell outer membrane. Functionally, probable protease; promotes adherence and invasion by directly binding to a host cell structure. The sequence is that of Adhesion and penetration protein autotransporter (hap) from Haemophilus influenzae (strain ATCC 51907 / DSM 11121 / KW20 / Rd).